The sequence spans 522 residues: MAPEMDQFYRSTMAIYKSIMEQFNPALENLVYLGNNYLRAFHALSEAAEVYFSAIQKIGEQALQSSTSQILGEILVQMSDTQRHLNSDLEVVVQTFHGDLLQHMEKNTKLDMQFIKDSCQHYEIEYRHRAANLEKCMSELWRMERKRDKNAREMKESVNRLHAQMQAFVSESKRAAELEEKRRYRFLAEKHLLLSNTFLQFLGRARGMLQNRVLLWKEQSEASRSPSRAHSPGLLGPALGPPYPSGRLTPTRLDMPPRPLGEYGSPRSRHGSGSYGPEPAEARSASQLEPDRRSLPRTPSASSLYASSTQRSRSNSFGERLGGGGARRVRALVSHSEGANHTLLRFSAGDVVEVLVPEAQNGWLYGKLEGSSASGWFPEAYVKPVEEIPVNPMNPVAPMNSMAPMSPMNELPSRSYPLRGSHSLDDLLDRPGNPTASSEYWDSQSRSRTPSRVPSRAPSPAPPPLPSSRRSSVGSMGAATDVKKLMSWEQNPPELFPRGTNPFATVKLRPTVTNDRSAPLIR.

Positions 1-239 constitute an IMD domain; that stretch reads MAPEMDQFYR…HSPGLLGPAL (239 aa). Disordered regions lie at residues 220-325 and 404-502; these read SEAS…GGGG and PMSP…GTNP. Phosphoserine occurs at positions 231, 272, and 303. The segment covering 297 to 317 has biased composition (polar residues); it reads RTPSASSLYASSTQRSRSNSF. An SH3 domain is found at 324 to 387; the sequence is GGARRVRALV…PEAYVKPVEE (64 aa). Over residues 443-456 the composition is skewed to low complexity; sequence SQSRSRTPSRVPSR. A compositionally biased stretch (pro residues) spans 457 to 466; it reads APSPAPPPLP. Phosphoserine occurs at positions 472 and 475.

In terms of tissue distribution, expressed in the epithelial layer of the intestine and in the kidney.

The protein localises to the cell membrane. It is found in the cell junction. Its subcellular location is the cytoplasmic vesicle membrane. Its function is as follows. Phosphoinositides-binding protein that induces the formation of planar or gently curved membrane structures. Binds to phosphoinositides, including to phosphatidylinositol 4,5-bisphosphate (PtdIns(4,5)P2) headgroups. There seems to be no clear preference for a specific phosphoinositide. This is BAR/IMD domain-containing adapter protein 2-like 2 (Baiap2l2) from Mus musculus (Mouse).